The following is a 150-amino-acid chain: uncharacterized protein (150 aa).

An N-terminal signal peptide occupies residues 1–28; it reads MPLDVWIAFSYFIDFFQWLFMLNAEVMR.

This is an uncharacterized protein from Archaeoglobus fulgidus (strain ATCC 49558 / DSM 4304 / JCM 9628 / NBRC 100126 / VC-16).